A 396-amino-acid polypeptide reads, in one-letter code: Protein nipi-4 (396 aa).

Topologically, residues 1–20 (MELDHTPPPSVLNDNCSASY) are extracellular. Asn-15 carries an N-linked (GlcNAc...) asparagine glycan. A helical membrane pass occupies residues 21–41 (MTPYATVIAMSGLYLLAIFYF). The Cytoplasmic portion of the chain corresponds to 42-396 (CKKSKKMCQP…EHHCQSVIHY (355 aa)). One can recognise a Protein kinase domain in the interval 81–368 (EVDDFQIGQT…SRLSELHHIV (288 aa)). Residues 87–95 (IGQTADGFI) and Lys-111 each bind ATP.

It belongs to the protein kinase superfamily. Tyr protein kinase family. As to expression, expressed in the epidermis of larvae and adults and in vulval and rectal cells.

The protein localises to the membrane. Its function is as follows. Pseudokinase which plays a role in resistance to fungal infection by promoting expression of antimicrobial peptides (nlp-29, nlp-31, nlp-34, cnc-1, cnc-2 and cnc-4) in the epidermis. In addition, up-regulates nlp-29 expression upon physical wounding and in response to phorbol ester PMA treatment. In Caenorhabditis elegans, this protein is Protein nipi-4.